Consider the following 208-residue polypeptide: Uracil phosphoribosyltransferase (208 aa).

5-phospho-alpha-D-ribose 1-diphosphate is bound by residues Arg-78, Arg-103, and 130 to 138; that span reads DPMLATGGT. Uracil-binding positions include Ile-193 and 198 to 200; that span reads GDA. Asp-199 serves as a coordination point for 5-phospho-alpha-D-ribose 1-diphosphate.

The protein belongs to the UPRTase family. The cofactor is Mg(2+).

The catalysed reaction is UMP + diphosphate = 5-phospho-alpha-D-ribose 1-diphosphate + uracil. The protein operates within pyrimidine metabolism; UMP biosynthesis via salvage pathway; UMP from uracil: step 1/1. Its activity is regulated as follows. Allosterically activated by GTP. Catalyzes the conversion of uracil and 5-phospho-alpha-D-ribose 1-diphosphate (PRPP) to UMP and diphosphate. The protein is Uracil phosphoribosyltransferase of Desulforapulum autotrophicum (strain ATCC 43914 / DSM 3382 / VKM B-1955 / HRM2) (Desulfobacterium autotrophicum).